The primary structure comprises 249 residues: Formylaminopyrimidine import ATP-binding protein ThiZ (249 aa).

The ABC transporter domain maps to 6 to 228; that stretch reads LTFEEVSFAY…RRKMETTEKM (223 aa). 39 to 46 lines the ATP pocket; it reads AKSGSGKS.

This sequence belongs to the ABC transporter superfamily. In terms of assembly, the complex is likely composed of an ATP-binding protein (ThiZ), a transmembrane protein (ThiX) and a solute-binding protein (ThiY).

The protein resides in the cell membrane. Its pathway is cofactor biosynthesis; thiamine diphosphate biosynthesis. Participates in a thiamine pyrimidine salvage pathway as part of the ABC transporter complex ThiXYZ involved in the import of thiamine degradation products such as the formylaminopyrimidine N-formyl-4-amino-5-aminomethyl-2-methylpyrimidine (FAMP). Is likely responsible for energy coupling to the transport system. The protein is Formylaminopyrimidine import ATP-binding protein ThiZ of Halalkalibacterium halodurans (strain ATCC BAA-125 / DSM 18197 / FERM 7344 / JCM 9153 / C-125) (Bacillus halodurans).